The chain runs to 318 residues: Vomeronasal type-1 receptor A11 (318 aa).

Topologically, residues 1–32 (MSEILFFSPQPLFSHMMNKNSRLHTHSNIKNT) are extracellular. A helical transmembrane segment spans residues 33–53 (FFSEIGIGISGNSFLLLFHIL). Topologically, residues 54–65 (KFIRGHRPRLTD) are cytoplasmic. The helical transmembrane segment at 66 to 86 (LPIGLLSLIHLLMLLLMAFIA) threads the bilayer. The Extracellular portion of the chain corresponds to 87 to 101 (TDIFISRRGWDGIIC). Cys101 and Cys188 are disulfide-bonded. The helical transmembrane segment at 102-118 (KFLVYLYGVLRGLSLCT) threads the bilayer. The Cytoplasmic portion of the chain corresponds to 119–147 (TSMLSVLQAIILSPRSSCLAKLKHKSPHH). The helical transmembrane segment at 148–168 (ISCAIIFLSVLYMLISSHILL) threads the bilayer. Over 169 to 206 (SITATPNLTMNDFLYVSQSCSLLPLSYLVQSMYSTLLA) the chain is Extracellular. Asn175 carries N-linked (GlcNAc...) asparagine glycosylation. A helical transmembrane segment spans residues 207-227 (LREVFLISLMVLSTLYMVVLL). The Cytoplasmic segment spans residues 228 to 254 (CRHRKQAQHLQGTSLSPKASAEQRATQ). The helical transmembrane segment at 255–275 (TILMLMTFFVLMSIFDSIVSC) threads the bilayer. The Extracellular segment spans residues 276–285 (SRTMFLDDPT). Residues 286–306 (SYSIHIFVMHIYATVSPFVFM) traverse the membrane as a helical segment. At 307–318 (STEKHIVNILRG) the chain is on the cytoplasmic side.

This sequence belongs to the G-protein coupled receptor 1 family.

Its subcellular location is the cell membrane. Putative pheromone receptor implicated in the regulation of social and reproductive behavior. The protein is Vomeronasal type-1 receptor A11 of Mus musculus (Mouse).